Consider the following 682-residue polypeptide: E3 ubiquitin ligase Rnf157 (682 aa).

The N-myristoyl glycine moiety is linked to residue Gly-2. The segment at 277 to 317 (CVVCLSDVRDTLILPCRHCASCNVHCADTLRYQANNCPICR) adopts an RING-type; degenerate zinc-finger fold. Positions 330–333 (RKKL) match the D-box 1 motif. Disordered regions lie at residues 440–604 (QNSS…VQED) and 655–682 (NTQR…PLAV). Polar residues predominate over residues 479–538 (ESENLTLSSSGAVDQSSCTGTPLSSTISSPEDPASSSLAQSVMSMASSQISTDTVSSMSG). Residues 585–597 (QDAEGNDIMEEED) show a composition bias toward acidic residues. A D-box 2 motif is present at residues 658–661 (RRRL). Ser-662, Ser-664, and Ser-665 each carry phosphoserine.

As to quaternary structure, interacts with APBB1. Interacts with CHD1; CHD1-binding controls RNF157 stability. Also interacts with ATRN, MEGF8, TECR, MSI2, PLRG1, BYSL, MTERF3, PSMA1, MRPS18B, PRPF4, FASTKD2, SLC25A1, SMU1, CNOT9, MRPS2, MAGT1, FXR2, EMD, PSMD8, HDAC1, RAN, HSD17B12, TXNDC5 and MRPL19. As to expression, predominantly expressed in the brain.

It is found in the cytoplasm. The catalysed reaction is S-ubiquitinyl-[E2 ubiquitin-conjugating enzyme]-L-cysteine + [acceptor protein]-L-lysine = [E2 ubiquitin-conjugating enzyme]-L-cysteine + N(6)-ubiquitinyl-[acceptor protein]-L-lysine.. Functionally, E3 ubiquitin ligase that ubiquitinates APBB1 for its degradation by the proteasome and thus prevents apoptosis and promotes survival of neurons. Has a dual role in neurons as it is also required for dendrite growth and maintenance for which its ligase activity is not critical. May act as a scaffold molecule to regulate this process. Acts as a downstream effector of the interconnected PI3K and MAPK signaling pathways and thus participates in the regulation of the cell cycle. The chain is E3 ubiquitin ligase Rnf157 (Rnf157) from Rattus norvegicus (Rat).